A 692-amino-acid polypeptide reads, in one-letter code: Catalase-B (692 aa).

Residues His-69 and Asn-142 contribute to the active site. Heme is bound at residue Tyr-356.

It belongs to the catalase family. Requires heme as cofactor.

The protein resides in the cytoplasm. The catalysed reaction is 2 H2O2 = O2 + 2 H2O. Occurs in almost all aerobically respiring organisms and serves to protect cells from the toxic effects of hydrogen peroxide. Its accumulation in prespore cells affords the spores protection from oxidation during prolonged dormancy. Required for normal developmental timing, possibly through a regulatory role in differentiation and morphogenesis. This is Catalase-B (catB) from Dictyostelium discoideum (Social amoeba).